A 108-amino-acid polypeptide reads, in one-letter code: Phosphoribosyl-ATP pyrophosphatase (108 aa).

It belongs to the PRA-PH family.

The protein localises to the cytoplasm. It catalyses the reaction 1-(5-phospho-beta-D-ribosyl)-ATP + H2O = 1-(5-phospho-beta-D-ribosyl)-5'-AMP + diphosphate + H(+). The protein operates within amino-acid biosynthesis; L-histidine biosynthesis; L-histidine from 5-phospho-alpha-D-ribose 1-diphosphate: step 2/9. This Thiobacillus denitrificans (strain ATCC 25259 / T1) protein is Phosphoribosyl-ATP pyrophosphatase.